The primary structure comprises 209 residues: Large ribosomal subunit protein uL4 (209 aa).

The disordered stretch occupies residues 46 to 71 (GTSSTKTRSEVRGSSKKPWKQKGTGR). Basic residues predominate over residues 59-71 (SSKKPWKQKGTGR).

The protein belongs to the universal ribosomal protein uL4 family. As to quaternary structure, part of the 50S ribosomal subunit.

In terms of biological role, one of the primary rRNA binding proteins, this protein initially binds near the 5'-end of the 23S rRNA. It is important during the early stages of 50S assembly. It makes multiple contacts with different domains of the 23S rRNA in the assembled 50S subunit and ribosome. Forms part of the polypeptide exit tunnel. This is Large ribosomal subunit protein uL4 from Borreliella afzelii (strain PKo) (Borrelia afzelii).